The chain runs to 350 residues: MMKVRPVERRDLADIFELAGKTGVGMTSLPQNEQHLAARIERALNTWQGSLDPGEQGYLFVLEDSEQQKVVGVSAIEVAVGLNDPWYNFRVGTLVHASKALNVYKSVPTLFLSNDHTGYSELCTLFLDPDYRKDKNGPFLSKVRFLFIAAFRQYFSRKVIAEMRGYTDEQGRSPFWESVGRHFFSIEFAKADYLSGTGQKAFIAELMPKHPLYVDFLAEEARAVIGQVHPHTAPARAVLETEGLQYQGYVDIFDGGPTLEANTDDVRAVRDSSKRTVVIKDYDIEDYDIDPNGRLYLVANDHYHHFRAILMNTHLSDERLRLTPESAEALGVAAGDSVRIVSLFAPETKR.

Residue L125 coordinates succinyl-CoA. The active-site Proton donor is H229.

Belongs to the arginine N-succinyltransferase family.

The catalysed reaction is succinyl-CoA + L-arginine = N(2)-succinyl-L-arginine + CoA + H(+). Its pathway is amino-acid degradation; L-arginine degradation via AST pathway; L-glutamate and succinate from L-arginine: step 1/5. Its function is as follows. Catalyzes the transfer of succinyl-CoA to arginine to produce N(2)-succinylarginine. The sequence is that of Arginine N-succinyltransferase from Yersinia pseudotuberculosis serotype IB (strain PB1/+).